The sequence spans 88 residues: Co-chaperonin GroES (88 aa).

The protein belongs to the GroES chaperonin family. As to quaternary structure, heptamer of 7 subunits arranged in a ring. Interacts with the chaperonin GroEL.

The protein localises to the cytoplasm. Together with the chaperonin GroEL, plays an essential role in assisting protein folding. The GroEL-GroES system forms a nano-cage that allows encapsulation of the non-native substrate proteins and provides a physical environment optimized to promote and accelerate protein folding. GroES binds to the apical surface of the GroEL ring, thereby capping the opening of the GroEL channel. The chain is Co-chaperonin GroES from Thermodesulfovibrio yellowstonii (strain ATCC 51303 / DSM 11347 / YP87).